We begin with the raw amino-acid sequence, 734 residues long: Ribosomal RNA large subunit methyltransferase K/L (734 aa).

The THUMP domain occupies 49-167; it reads QAYRVCMWSR…KTEHTYCLDL (119 aa).

This sequence belongs to the methyltransferase superfamily. RlmKL family.

It is found in the cytoplasm. It carries out the reaction guanosine(2445) in 23S rRNA + S-adenosyl-L-methionine = N(2)-methylguanosine(2445) in 23S rRNA + S-adenosyl-L-homocysteine + H(+). The enzyme catalyses guanosine(2069) in 23S rRNA + S-adenosyl-L-methionine = N(2)-methylguanosine(2069) in 23S rRNA + S-adenosyl-L-homocysteine + H(+). Specifically methylates the guanine in position 2445 (m2G2445) and the guanine in position 2069 (m7G2069) of 23S rRNA. This chain is Ribosomal RNA large subunit methyltransferase K/L, found in Acinetobacter baylyi (strain ATCC 33305 / BD413 / ADP1).